The primary structure comprises 305 residues: Porphobilinogen deaminase (305 aa).

Cysteine 241 bears the S-(dipyrrolylmethanemethyl)cysteine mark.

This sequence belongs to the HMBS family. In terms of assembly, monomer. Requires dipyrromethane as cofactor.

It carries out the reaction 4 porphobilinogen + H2O = hydroxymethylbilane + 4 NH4(+). Its pathway is porphyrin-containing compound metabolism; protoporphyrin-IX biosynthesis; coproporphyrinogen-III from 5-aminolevulinate: step 2/4. Tetrapolymerization of the monopyrrole PBG into the hydroxymethylbilane pre-uroporphyrinogen in several discrete steps. This is Porphobilinogen deaminase from Exiguobacterium sp. (strain ATCC BAA-1283 / AT1b).